A 237-amino-acid chain; its full sequence is Probable transcriptional regulatory protein Fjoh_2560 (237 aa).

This sequence belongs to the TACO1 family.

It is found in the cytoplasm. The sequence is that of Probable transcriptional regulatory protein Fjoh_2560 from Flavobacterium johnsoniae (strain ATCC 17061 / DSM 2064 / JCM 8514 / BCRC 14874 / CCUG 350202 / NBRC 14942 / NCIMB 11054 / UW101) (Cytophaga johnsonae).